An 87-amino-acid polypeptide reads, in one-letter code: Cell division topological specificity factor (87 aa).

It belongs to the MinE family.

In terms of biological role, prevents the cell division inhibition by proteins MinC and MinD at internal division sites while permitting inhibition at polar sites. This ensures cell division at the proper site by restricting the formation of a division septum at the midpoint of the long axis of the cell. In Neisseria gonorrhoeae (strain ATCC 700825 / FA 1090), this protein is Cell division topological specificity factor.